Here is a 698-residue protein sequence, read N- to C-terminus: Protein artemis (698 aa).

Phosphothreonine is present on Thr380. At Ser385 the chain carries Phosphoserine. Disordered stretches follow at residues 445 to 485, 505 to 595, and 620 to 669; these read ANFV…DPDV, LENL…DSIS, and NGVP…LPKP. Acidic residues predominate over residues 449 to 461; the sequence is DCDESNSDSEGEL. Positions 508–521 are enriched in polar residues; that stretch reads LPSSIETGGSQSPK. Low complexity predominate over residues 538-551; the sequence is THISSQNSSQSTHI. The span at 552–583 shows a compositional bias: polar residues; sequence TDQGSQGWDSQCDTVLLSSQEKSGGDSTSLNK. Residues 641 to 655 are compositionally biased toward low complexity; that stretch reads TSLTSTQADSQSSSD. At Ser650 the chain carries Phosphoserine; by ATM.

This sequence belongs to the DNA repair metallo-beta-lactamase (DRMBL) family. Interacts with LIG4; the interaction is direct. Interacts with ATM. Interacts with BRCA1. Interacts with PRKDC. Interacts with TP53BP1. Also exhibits ATM- and phosphorylation-dependent interaction with the MRN complex, composed of MRE11, RAD50, and NBN. Post-translationally, phosphorylation on undefined residues by PRKDC may stimulate endonucleolytic activity on 5' and 3' hairpins and overhangs. PRKDC must remain present, even after phosphorylation, for efficient hairpin opening. Also phosphorylated by ATM in response to ionizing radiation (IR) and by ATR in response to ultraviolet (UV) radiation.

Its subcellular location is the nucleus. Its function is as follows. Required for V(D)J recombination, the process by which exons encoding the antigen-binding domains of immunoglobulins and T-cell receptor proteins are assembled from individual V, (D), and J gene segments. V(D)J recombination is initiated by the lymphoid specific RAG endonuclease complex, which generates site specific DNA double strand breaks (DSBs). These DSBs present two types of DNA end structures: hairpin sealed coding ends and phosphorylated blunt signal ends. These ends are independently repaired by the non homologous end joining (NHEJ) pathway to form coding and signal joints respectively. This protein exhibits single-strand specific 5'-3' exonuclease activity in isolation, and acquires endonucleolytic activity on 5' and 3' hairpins and overhangs when in a complex with PRKDC. The latter activity is required specifically for the resolution of closed hairpins prior to the formation of the coding joint. May also be required for the repair of complex DSBs induced by ionizing radiation, which require substantial end-processing prior to religation by NHEJ. In Rattus norvegicus (Rat), this protein is Protein artemis (Dclre1c).